The sequence spans 262 residues: tRNA pseudouridine synthase A (262 aa).

The Nucleophile role is filled by D51. A substrate-binding site is contributed by Y109.

Belongs to the tRNA pseudouridine synthase TruA family. Homodimer.

It catalyses the reaction uridine(38/39/40) in tRNA = pseudouridine(38/39/40) in tRNA. Its function is as follows. Formation of pseudouridine at positions 38, 39 and 40 in the anticodon stem and loop of transfer RNAs. The polypeptide is tRNA pseudouridine synthase A (Actinobacillus pleuropneumoniae serotype 3 (strain JL03)).